Reading from the N-terminus, the 938-residue chain is Isoleucine--tRNA ligase (938 aa).

Residues 58 to 68 (PYANGSIHIGH) carry the 'HIGH' region motif. Residue lysine 183 is modified to N6-acetyllysine. Glutamate 561 contacts L-isoleucyl-5'-AMP. The 'KMSKS' region signature appears at 602 to 606 (KMSKS). An ATP-binding site is contributed by lysine 605. Zn(2+) is bound by residues cysteine 901, cysteine 904, cysteine 921, and cysteine 924.

Belongs to the class-I aminoacyl-tRNA synthetase family. IleS type 1 subfamily. In terms of assembly, monomer. It depends on Zn(2+) as a cofactor.

The protein localises to the cytoplasm. It carries out the reaction tRNA(Ile) + L-isoleucine + ATP = L-isoleucyl-tRNA(Ile) + AMP + diphosphate. Catalyzes the attachment of isoleucine to tRNA(Ile). As IleRS can inadvertently accommodate and process structurally similar amino acids such as valine, to avoid such errors it has two additional distinct tRNA(Ile)-dependent editing activities. One activity is designated as 'pretransfer' editing and involves the hydrolysis of activated Val-AMP. The other activity is designated 'posttransfer' editing and involves deacylation of mischarged Val-tRNA(Ile). This is Isoleucine--tRNA ligase from Escherichia coli O9:H4 (strain HS).